We begin with the raw amino-acid sequence, 153 residues long: Transcriptional repressor NrdR (153 aa).

Residues 3–34 fold into a zinc finger; it reads CPFCGYEDSKVVDTRPTNEGKTIKRRRECLKC. Positions 49-139 constitute an ATP-cone domain; sequence ILVIKKDNRR…VYRQFKDINT (91 aa).

This sequence belongs to the NrdR family. Zn(2+) serves as cofactor.

Functionally, negatively regulates transcription of bacterial ribonucleotide reductase nrd genes and operons by binding to NrdR-boxes. The sequence is that of Transcriptional repressor NrdR from Caldicellulosiruptor bescii (strain ATCC BAA-1888 / DSM 6725 / KCTC 15123 / Z-1320) (Anaerocellum thermophilum).